A 144-amino-acid polypeptide reads, in one-letter code: Testis-specific protein TSX (144 aa).

Disordered stretches follow at residues 1 to 21 (MSEK…DLPE), 69 to 99 (EDRV…RDID), and 120 to 144 (FTDQ…NPTD). The span at 75-90 (TDDEDTCQAGCTEDDE) shows a compositional bias: acidic residues.

In terms of tissue distribution, testis.

May have an RNA/DNA binding role. This chain is Testis-specific protein TSX (Tsx), found in Mus musculus (Mouse).